The chain runs to 1265 residues: 5-oxoprolinase (1265 aa).

The protein belongs to the oxoprolinase family. As to quaternary structure, homodimer.

Its subcellular location is the cytoplasm. It is found in the cytosol. It catalyses the reaction 5-oxo-L-proline + ATP + 2 H2O = L-glutamate + ADP + phosphate + H(+). Its function is as follows. Catalyzes the cleavage of 5-oxo-L-proline to form L-glutamate coupled to the hydrolysis of ATP to ADP and inorganic phosphate. The polypeptide is 5-oxoprolinase (oplah) (Dictyostelium discoideum (Social amoeba)).